The chain runs to 289 residues: Bifunctional protein FolD (289 aa).

NADP(+) is bound by residues 166 to 168 (GRS), Ser191, and Ile232.

It belongs to the tetrahydrofolate dehydrogenase/cyclohydrolase family. In terms of assembly, homodimer.

The enzyme catalyses (6R)-5,10-methylene-5,6,7,8-tetrahydrofolate + NADP(+) = (6R)-5,10-methenyltetrahydrofolate + NADPH. The catalysed reaction is (6R)-5,10-methenyltetrahydrofolate + H2O = (6R)-10-formyltetrahydrofolate + H(+). Its pathway is one-carbon metabolism; tetrahydrofolate interconversion. Its function is as follows. Catalyzes the oxidation of 5,10-methylenetetrahydrofolate to 5,10-methenyltetrahydrofolate and then the hydrolysis of 5,10-methenyltetrahydrofolate to 10-formyltetrahydrofolate. The polypeptide is Bifunctional protein FolD (Synechococcus sp. (strain JA-3-3Ab) (Cyanobacteria bacterium Yellowstone A-Prime)).